We begin with the raw amino-acid sequence, 529 residues long: Cytochrome P450 monooxygenase acuD (529 aa).

Residues 8–28 (FAVIAASAAAVAGVLFLIYAA) traverse the membrane as a helical segment. N-linked (GlcNAc...) asparagine glycosylation occurs at Asn-81. Heme is bound at residue Cys-449.

The protein belongs to the cytochrome P450 family. Requires heme as cofactor.

The protein resides in the endoplasmic reticulum membrane. The enzyme catalyses 3-hydroxybenzyl alcohol + reduced [NADPH--hemoprotein reductase] + O2 = gentisyl alcohol + oxidized [NADPH--hemoprotein reductase] + H2O + H(+). It functions in the pathway secondary metabolite biosynthesis. Its function is as follows. Cytochrome P450 monooxygenase; part of the gene cluster that mediates the biosynthesis of aculins. The pathway begins with the synthesis of 6-methylsalicylic acid by the polyketide synthase (PKS) acuA via condensation of acetate and malonate units. The 6-methylsalicylic acid decarboxylase acuB then catalyzes the decarboxylation of 6-methylsalicylic acid to yield m-cresol (also known as 3-methylphenol). These first reactions occur in the cytosol. The intermediate m-cresol is then transported into the endoplasmic reticulum where the cytochrome P450 monooxygenase acuC converts it to m-hydroxybenzyl alcohol, which is further converted to gentisyl alcohol by the cytochrome P450 monooxygenase acuD. Gentisyl alcohol is further oxidized by the oxidoreductase acuE that probably catalyzes hydroxylation of the aromatic ring. The aromatic system might then be opened by oxidation through a Baeyer-Villiger type of oxidation, which could be catalyzed by acuF, with the carboxylic acid at C-1 subsequently reduced to an aldehyde by acuG. Subsequently, a hemiacetal is formed, before the dehydrogenase acuH would reduce the double bond between C-4 and C-6. Finally, keto-enol tautomerism results in formation of aculinic acid, which exists as two diastereomers (both R/S configurations at C-1) by non-enzymatic hemiacetal formation. The carboxypeptidase acuI could be involved in the linking of aculinic acid to an aculene A moiety produced by the aculene biosynthesis cluster and which leads to the production of aculin A. AcuI may also be involved in the attachment of proline to aculinic acid to form epi-aculins A and B. This chain is Cytochrome P450 monooxygenase acuD, found in Aspergillus aculeatus (strain ATCC 16872 / CBS 172.66 / WB 5094).